We begin with the raw amino-acid sequence, 718 residues long: Homeobox-leucine zipper protein HDG9 (718 aa).

Residues 1-12 (MDFTRDDNSSDE) show a composition bias toward basic and acidic residues. The segment at 1 to 35 (MDFTRDDNSSDERENDVDANTNNRHEKKGYHRHTN) is disordered. Positions 26 to 85 (EKKGYHRHTNEQIHRLETYFKECPHPDEFQRRLLGEELNLKPKQIKFWFQNKRTQAKSHN) form a DNA-binding region, homeobox. The stretch at 78–152 (RTQAKSHNEK…LKDEYERVSN (75 aa)) forms a coiled coil. The tract at residues 169 to 209 (PYLHGPSNHASTSKNRPALYGTSSNRLPEPSSIFRGPYTRG) is disordered. A compositionally biased stretch (polar residues) spans 176–194 (NHASTSKNRPALYGTSSNR). The 233-residue stretch at 232–464 (SQLEKIAMLE…LERTCERLIF (233 aa)) folds into the START domain.

The protein belongs to the HD-ZIP homeobox family. Class IV subfamily. Expressed in anthers with highest levels in the tapetum and pollen grains, and chalazal end of the embryo sac.

The protein localises to the nucleus. Its function is as follows. Probable transcription factor that binds to the DNA sequence 5'-GCATTAAATGCGCA-3'. The chain is Homeobox-leucine zipper protein HDG9 (HDG9) from Arabidopsis thaliana (Mouse-ear cress).